Reading from the N-terminus, the 409-residue chain is MSLPFYTIDDFNLEDKTVLVRVDINSPVDPSTGSILDDTKIKLHAETIDEISKKGAKTVVLAHQSRPGKKDFTTLQQHAKALSNILNRPVDYIDDIFGTAAREEIKRLKKGDILLLENVRFYPEEILKRDPHQQAETHMVRKLYPIIDIFINDAFAAAHRSQPSLVGFAVKLPSGAGRIMEKELKSLYGAVDNAEKPCVYVLGGVKVDDSIMVLENVLRNGSADYVLTTGLVANIFLWASGINLGKYNEDFIINKGYIDFVEKGKQLLEEFDGQIKMPDDVAVCVDNARVEYCTKNIPNKPIYDIGTNTITEYAKFIRDAKTIFANGPAGVFEQEGFSIGTEDILNTIASSNGYSIIGGGHLAAAANQMGLSSGITHISSGGGASINLLAGEKLPVVEILTEVKMKGRK.

Substrate is bound by residues 23–25, 63–66, arginine 120, and arginine 160; these read DIN and HQSR. ATP-binding positions include glutamate 333 and 359–362; that span reads GGHL.

This sequence belongs to the phosphoglycerate kinase family. Monomer.

The protein localises to the cytoplasm. It carries out the reaction (2R)-3-phosphoglycerate + ATP = (2R)-3-phospho-glyceroyl phosphate + ADP. It participates in carbohydrate degradation; glycolysis; pyruvate from D-glyceraldehyde 3-phosphate: step 2/5. The sequence is that of Phosphoglycerate kinase (pgk) from Methanobacterium bryantii.